The primary structure comprises 604 residues: Tyrosine-protein kinase transforming protein erbB (604 aa).

The 268-residue stretch at 132-399 (FKKVKVLGSG…KMARDPPRYL (268 aa)) folds into the Protein kinase domain. ATP is bound by residues 138 to 146 (LGSGAFGTI) and Lys-165. Asp-257 serves as the catalytic Proton acceptor.

This sequence belongs to the protein kinase superfamily. Tyr protein kinase family. EGF receptor subfamily.

The catalysed reaction is L-tyrosyl-[protein] + ATP = O-phospho-L-tyrosyl-[protein] + ADP + H(+). Functionally, the v-erbB oncogene transforms avian fibroblasts and erythroblasts in culture and induces sarcomas and erythroleukemias in chickens. It is a truncated and mutated version of the receptor for epidermal growth factor. The polypeptide is Tyrosine-protein kinase transforming protein erbB (V-ERBB) (Galliformes).